Consider the following 124-residue polypeptide: S-adenosylmethionine decarboxylase proenzyme (124 aa).

The Schiff-base intermediate with substrate; via pyruvic acid role is filled by serine 63. Serine 63 is subject to Pyruvic acid (Ser); by autocatalysis. Residue histidine 68 is the Proton acceptor; for processing activity of the active site. The active-site Proton donor; for catalytic activity is the cysteine 83.

The protein belongs to the prokaryotic AdoMetDC family. Type 1 subfamily. As to quaternary structure, heterotetramer of two alpha and two beta chains arranged as a dimer of alpha/beta heterodimers. Pyruvate serves as cofactor. In terms of processing, is synthesized initially as an inactive proenzyme. Formation of the active enzyme involves a self-maturation process in which the active site pyruvoyl group is generated from an internal serine residue via an autocatalytic post-translational modification. Two non-identical subunits are generated from the proenzyme in this reaction, and the pyruvate is formed at the N-terminus of the alpha chain, which is derived from the carboxyl end of the proenzyme. The post-translation cleavage follows an unusual pathway, termed non-hydrolytic serinolysis, in which the side chain hydroxyl group of the serine supplies its oxygen atom to form the C-terminus of the beta chain, while the remainder of the serine residue undergoes an oxidative deamination to produce ammonia and the pyruvoyl group blocking the N-terminus of the alpha chain.

The enzyme catalyses S-adenosyl-L-methionine + H(+) = S-adenosyl 3-(methylsulfanyl)propylamine + CO2. It functions in the pathway amine and polyamine biosynthesis; S-adenosylmethioninamine biosynthesis; S-adenosylmethioninamine from S-adenosyl-L-methionine: step 1/1. Its function is as follows. Catalyzes the decarboxylation of S-adenosylmethionine to S-adenosylmethioninamine (dcAdoMet), the propylamine donor required for the synthesis of the polyamines spermine and spermidine from the diamine putrescine. This chain is S-adenosylmethionine decarboxylase proenzyme, found in Geobacillus kaustophilus (strain HTA426).